The primary structure comprises 388 residues: Mannitol-1-phosphate 5-dehydrogenase (388 aa).

5–16 (AIQFGGGNIGRG) lines the NAD(+) pocket. Lys-213 is a catalytic residue.

Belongs to the mannitol dehydrogenase family. As to quaternary structure, monomer.

It carries out the reaction D-mannitol 1-phosphate + NAD(+) = beta-D-fructose 6-phosphate + NADH + H(+). Its function is as follows. Catalyzes the NAD(H)-dependent interconversion of D-fructose 6-phosphate and D-mannitol 1-phosphate in the mannitol metabolic pathway. This chain is Mannitol-1-phosphate 5-dehydrogenase (mpdA), found in Aspergillus terreus (strain NIH 2624 / FGSC A1156).